We begin with the raw amino-acid sequence, 310 residues long: Zinc-finger homeodomain protein 3 (310 aa).

The segment at 1–64 is disordered; that stretch reads MEIASQEDPI…GLGKNHDHSH (64 aa). Residues 39 to 56 show a composition bias toward polar residues; sequence LNITTSNPLLVSSNSNGL. The segment at 87 to 136 adopts a ZF-HD dimerization-type; degenerate zinc-finger fold; sequence YKECLKNHAATMGGNAIDGCGEFMPSGEEGSIEALTCSVCNCHRNFHRRE. Disordered regions lie at residues 184–220 and 281–310; these read TAGS…YGHN and LSKK…STNP. Residues 190–199 show a composition bias toward acidic residues; sequence ESEDLMEEEG. Residues 222 to 285 constitute a DNA-binding region (homeobox); it reads KKRFRTKFTQ…NNKQNLSKKS (64 aa). The segment covering 281 to 291 has biased composition (low complexity); sequence LSKKSNNVSNN. Residues 292–310 show a composition bias toward polar residues; sequence VDLSAGNNDITENLASTNP.

Homo- and heterodimer with other ZFHD proteins. Interacts with MIF2 and MIF3; these interactions prevent nuclear localization and DNA-binding to inhibit transcription regulation activity. Binds to ZHD1, ZHD2 and ZHD11. Interacts with HIPP30. Interacts with KIN10, KIN11 and FLZ8. As to expression, mostly expressed in flowers and inflorescence.

The protein resides in the nucleus. Putative transcription factor. In Arabidopsis thaliana (Mouse-ear cress), this protein is Zinc-finger homeodomain protein 3 (ZHD3).